The primary structure comprises 275 residues: Light-independent protochlorophyllide reductase iron-sulfur ATP-binding protein (275 aa).

Residues 10 to 15 (GIGKST) and lysine 39 contribute to the ATP site. A Mg(2+)-binding site is contributed by serine 14. Cysteine 95 and cysteine 129 together coordinate [4Fe-4S] cluster. An ATP-binding site is contributed by 180–181 (NR).

This sequence belongs to the NifH/BchL/ChlL family. As to quaternary structure, homodimer. Protochlorophyllide reductase is composed of three subunits; ChlL, ChlN and ChlB. It depends on [4Fe-4S] cluster as a cofactor.

The enzyme catalyses chlorophyllide a + oxidized 2[4Fe-4S]-[ferredoxin] + 2 ADP + 2 phosphate = protochlorophyllide a + reduced 2[4Fe-4S]-[ferredoxin] + 2 ATP + 2 H2O. The protein operates within porphyrin-containing compound metabolism; chlorophyll biosynthesis (light-independent). Functionally, component of the dark-operative protochlorophyllide reductase (DPOR) that uses Mg-ATP and reduced ferredoxin to reduce ring D of protochlorophyllide (Pchlide) to form chlorophyllide a (Chlide). This reaction is light-independent. The L component serves as a unique electron donor to the NB-component of the complex, and binds Mg-ATP. The chain is Light-independent protochlorophyllide reductase iron-sulfur ATP-binding protein from Gloeobacter violaceus (strain ATCC 29082 / PCC 7421).